We begin with the raw amino-acid sequence, 399 residues long: Dual-specificity RNA methyltransferase RlmN (399 aa).

Residue Glu120 is the Proton acceptor of the active site. One can recognise a Radical SAM core domain in the interval 126–367; sequence EEGRGTLCVS…SPVRTPRGRD (242 aa). Cys133 and Cys372 are disulfide-bonded. Cys140, Cys144, and Cys147 together coordinate [4Fe-4S] cluster. S-adenosyl-L-methionine contacts are provided by residues 198–199, Ser230, 252–254, and Asn329; these read GE and SLH. Catalysis depends on Cys372, which acts as the S-methylcysteine intermediate.

The protein belongs to the radical SAM superfamily. RlmN family. Requires [4Fe-4S] cluster as cofactor.

It localises to the cytoplasm. It carries out the reaction adenosine(2503) in 23S rRNA + 2 reduced [2Fe-2S]-[ferredoxin] + 2 S-adenosyl-L-methionine = 2-methyladenosine(2503) in 23S rRNA + 5'-deoxyadenosine + L-methionine + 2 oxidized [2Fe-2S]-[ferredoxin] + S-adenosyl-L-homocysteine. The catalysed reaction is adenosine(37) in tRNA + 2 reduced [2Fe-2S]-[ferredoxin] + 2 S-adenosyl-L-methionine = 2-methyladenosine(37) in tRNA + 5'-deoxyadenosine + L-methionine + 2 oxidized [2Fe-2S]-[ferredoxin] + S-adenosyl-L-homocysteine. In terms of biological role, specifically methylates position 2 of adenine 2503 in 23S rRNA and position 2 of adenine 37 in tRNAs. m2A2503 modification seems to play a crucial role in the proofreading step occurring at the peptidyl transferase center and thus would serve to optimize ribosomal fidelity. In Parvibaculum lavamentivorans (strain DS-1 / DSM 13023 / NCIMB 13966), this protein is Dual-specificity RNA methyltransferase RlmN.